The chain runs to 340 residues: Ketol-acid reductoisomerase (NADP(+)) (340 aa).

The 181-residue stretch at 3–183 folds into the KARI N-terminal Rossmann domain; that stretch reads VNIYYDKDCD…GGGRTGIIET (181 aa). NADP(+)-binding positions include 26–29, S54, and 84–87; these read FGSQ and DELQ. H109 is a catalytic residue. G135 provides a ligand contact to NADP(+). The KARI C-terminal knotted domain occupies 184 to 329; sequence TFKDETETDL…KKLRAMMPWI (146 aa). Mg(2+) contacts are provided by D192, E196, E228, and E232. S253 contributes to the substrate binding site.

It belongs to the ketol-acid reductoisomerase family. Requires Mg(2+) as cofactor.

It carries out the reaction (2R)-2,3-dihydroxy-3-methylbutanoate + NADP(+) = (2S)-2-acetolactate + NADPH + H(+). The enzyme catalyses (2R,3R)-2,3-dihydroxy-3-methylpentanoate + NADP(+) = (S)-2-ethyl-2-hydroxy-3-oxobutanoate + NADPH + H(+). Its pathway is amino-acid biosynthesis; L-isoleucine biosynthesis; L-isoleucine from 2-oxobutanoate: step 2/4. The protein operates within amino-acid biosynthesis; L-valine biosynthesis; L-valine from pyruvate: step 2/4. In terms of biological role, involved in the biosynthesis of branched-chain amino acids (BCAA). Catalyzes an alkyl-migration followed by a ketol-acid reduction of (S)-2-acetolactate (S2AL) to yield (R)-2,3-dihydroxy-isovalerate. In the isomerase reaction, S2AL is rearranged via a Mg-dependent methyl migration to produce 3-hydroxy-3-methyl-2-ketobutyrate (HMKB). In the reductase reaction, this 2-ketoacid undergoes a metal-dependent reduction by NADPH to yield (R)-2,3-dihydroxy-isovalerate. The polypeptide is Ketol-acid reductoisomerase (NADP(+)) (Campylobacter curvus (strain 525.92)).